The following is a 459-amino-acid chain: MANITNEFMGHDMLAPFTAGWQSDMEPLVIEKSEGSYVYDINGKKYLDTLSGLWCTTLGGSETRLVEAANKQLNTLPFYHSFWNRTTKPSLDLAKELLNMFTANKMAKVFFTNSGSEANDTQVKLVWYYNNALGRPQKKKIIARAKAYHGSTYISAGLSGLPPMHQKFDLPPPFVLHTECPHYWAYHLPGETEEEFSTRLANNLESLILNEGPETVAAFIAEPVLGAAGVILPPATYFDKVQAILRKHDILFIADEVVCGFGRLGTMFGSDKYNIKPDLVSVAKALSSGYMPIAAVLVSQKISSVILSESNKIGAFCHGFTYSGHPVACAVALEALKIYKERNITEVVNKISQKFQEGLKAFADSPIIGEIRGTGLALSTEFVNNKSPNDPFPYEWAVGTYFGAQCAKYGMLVSSTGDHVNMAPPFTLSLEELDELIRIYGKALKDTEKRVEELKSQKK.

Residues 115–116 and aspartate 255 contribute to the pyridoxal 5'-phosphate site; that span reads GS. Position 284 is an N6-(pyridoxal phosphate)lysine (lysine 284). 320 to 321 serves as a coordination point for pyridoxal 5'-phosphate; sequence FT. Positions 430 to 457 form a coiled coil; it reads LEELDELIRIYGKALKDTEKRVEELKSQ.

It belongs to the class-III pyridoxal-phosphate-dependent aminotransferase family. As to expression, confined to the placenta of green fruits at high levels. Barely detectable in the pericarp and seeds as well as in the placenta of mature fruits.

The catalysed reaction is vanillin + L-alanine = vanillylamine + pyruvate. Its pathway is aromatic compound metabolism; phenylpropanoid biosynthesis. Involved in the biosynthesis of capsaicinoids natural products, pungent alkaloids synthesized from phenylpropanoid intermediates in the placental tissue of chili pepper fruit acting as repellant on herbivorous mammals and conferring spiciness to hot peppers. Can transfer an amine from vanillylamine to pyruvate forming vanillin and L-alanine. This Capsicum annuum (Capsicum pepper) protein is Vanillin aminotransferase.